A 337-amino-acid polypeptide reads, in one-letter code: Fructose-1,6-bisphosphatase class 1 (337 aa).

Residues E92, D114, L116, and D117 each contribute to the Mg(2+) site. Substrate contacts are provided by residues 117–120 (DGSS), N209, and K275. Mg(2+) is bound at residue E281.

This sequence belongs to the FBPase class 1 family. In terms of assembly, homotetramer. The cofactor is Mg(2+).

It localises to the cytoplasm. The catalysed reaction is beta-D-fructose 1,6-bisphosphate + H2O = beta-D-fructose 6-phosphate + phosphate. It functions in the pathway carbohydrate biosynthesis; gluconeogenesis. In Thiobacillus denitrificans (strain ATCC 25259 / T1), this protein is Fructose-1,6-bisphosphatase class 1.